The following is a 404-amino-acid chain: Putative arginine deiminase (404 aa).

The active-site Amidino-cysteine intermediate is cysteine 394.

The protein belongs to the arginine deiminase family.

It is found in the cytoplasm. It catalyses the reaction L-arginine + H2O = L-citrulline + NH4(+). The protein operates within amino-acid degradation; L-arginine degradation via ADI pathway; carbamoyl phosphate from L-arginine: step 1/2. The polypeptide is Putative arginine deiminase (arcA) (Mycoplasma pneumoniae (strain ATCC 29342 / M129 / Subtype 1) (Mycoplasmoides pneumoniae)).